The chain runs to 301 residues: MKSNPAIQAAIDLTAGAAGGTACVLTGQPFDTMKVKMQTFPDLYRGLTDCCLKTYSQVGFRGFYKGTSPALIANIAENSVLFMCYGFCQQVVRKVVGLDQQAKLSDLQNAAAGSFASAFAALVLCPTELVKCRLQTMYEMETSGKIAASQNTVWSVVKEIFRKDGPLGFYHGLSSTLLREVPGYFFFFGGYELSRSFFASGRSKDELGPVPLMLSGGFGGICLWLAVYPVDCIKSRIQVLSMTGKQTGLVRTFLSIVKNEGITALYSGLKPTMIRAFPANGALFLAYEYSRKLMMNQLEAW.

Transmembrane regions (helical) follow at residues Pro-5–Leu-25, Ser-68–Cys-88, Ala-110–Val-130, Gly-168–Phe-188, Leu-207–Val-227, and Ile-237–Val-257. 3 Solcar repeats span residues Ile-7–Val-91, Leu-104–Phe-197, and Leu-207–Leu-293.

The protein belongs to the mitochondrial carrier (TC 2.A.29) family. Widely expressed, with highest levels in the liver, testis and kidney. In the brain, expressed at high levels in the hypothalamus.

The protein resides in the mitochondrion inner membrane. It localises to the mitochondrion membrane. The catalysed reaction is L-citrulline(in) + L-ornithine(out) + H(+)(in) = L-citrulline(out) + L-ornithine(in) + H(+)(out). The enzyme catalyses L-ornithine(in) + L-arginine(out) = L-ornithine(out) + L-arginine(in). It catalyses the reaction L-ornithine(out) + L-lysine(in) = L-ornithine(in) + L-lysine(out). It carries out the reaction L-lysine(out) + H(+)(in) = L-lysine(in) + H(+)(out). The catalysed reaction is L-ornithine(out) + H(+)(in) = L-ornithine(in) + H(+)(out). With respect to regulation, inhibited by pyridoxal 5'-phosphate as well as by mercurials (mersalyl, p-chloromercuribenzene sulfonate, and mercuric chloride), N-ethylmaleimide and spermine. In terms of biological role, mitochondrial ornithine-citrulline antiporter. Catalyzes the exchange between cytosolic ornithine and mitochondrial citrulline plus an H(+), the proton compensates the positive charge of ornithine thus leading to an electroneutral transport. Plays a crucial role in the urea cycle, by connecting the cytosolic and the intramitochondrial reactions of the urea cycle. Lysine and arginine are also transported by the antiport mechanism. In addition, catalyzes an electroneutral exchange of ornithine or lysine for H(+), a reaction driven by the pH gradient across the inner membrane. This chain is Mitochondrial ornithine transporter 1, found in Mus musculus (Mouse).